Consider the following 610-residue polypeptide: Protein mono-ADP-ribosyltransferase PARP6 (610 aa).

Positions 374 to 600 constitute a PARP catalytic domain; it reads EMTQGSYLEI…QDPKIQKEIM (227 aa). At Asp580 the chain carries ADP-ribosyl aspartic acid.

The protein belongs to the ARTD/PARP family. Auto-mono-ADP-ribosylated.

The enzyme catalyses L-aspartyl-[protein] + NAD(+) = 4-O-(ADP-D-ribosyl)-L-aspartyl-[protein] + nicotinamide. The catalysed reaction is L-cysteinyl-[protein] + NAD(+) = S-(ADP-D-ribosyl)-L-cysteinyl-[protein] + nicotinamide + H(+). In terms of biological role, mono-ADP-ribosyltransferase that mediates mono-ADP-ribosylation of target proteins. This Pongo abelii (Sumatran orangutan) protein is Protein mono-ADP-ribosyltransferase PARP6.